Here is a 196-residue protein sequence, read N- to C-terminus: Adenylate kinase (196 aa).

9-17 (GIPGVGKST) provides a ligand contact to ATP.

This sequence belongs to the archaeal adenylate kinase family.

It localises to the cytoplasm. It carries out the reaction AMP + ATP = 2 ADP. This chain is Adenylate kinase, found in Pyrococcus furiosus (strain ATCC 43587 / DSM 3638 / JCM 8422 / Vc1).